Consider the following 398-residue polypeptide: Phosphoglycerate kinase (398 aa).

Residues Asp-21 to Asn-23, Arg-36, His-59 to Arg-62, Arg-119, and Arg-157 contribute to the substrate site. ATP is bound by residues Lys-208, Gly-296, Glu-327, and Gly-354 to Ser-357.

Belongs to the phosphoglycerate kinase family. As to quaternary structure, monomer.

Its subcellular location is the cytoplasm. The catalysed reaction is (2R)-3-phosphoglycerate + ATP = (2R)-3-phospho-glyceroyl phosphate + ADP. The protein operates within carbohydrate degradation; glycolysis; pyruvate from D-glyceraldehyde 3-phosphate: step 2/5. The chain is Phosphoglycerate kinase from Streptococcus pneumoniae serotype 4 (strain ATCC BAA-334 / TIGR4).